The sequence spans 174 residues: Chaperonin-like RBCX protein 1, chloroplastic (174 aa).

A chloroplast-targeting transit peptide spans 1–45 (MESSSSLLHHSYLSYLNPKFGKRPLVSYPLMQSSRKCKQTRICSN).

Belongs to the RbcX family. As to quaternary structure, homodimer. Interacts with rbcL, atpB and THI1.

Its subcellular location is the plastid. It localises to the chloroplast. In terms of biological role, chaperone involved in RuBisCO assembly process. The sequence is that of Chaperonin-like RBCX protein 1, chloroplastic from Arabidopsis thaliana (Mouse-ear cress).